The primary structure comprises 139 residues: Small ribosomal subunit protein bS6 (139 aa).

The segment covering 114–133 (KKEPREPRAPREPRVEKVDE) has biased composition (basic and acidic residues). The segment at 114 to 139 (KKEPREPRAPREPRVEKVDEQTFTEE) is disordered.

The protein belongs to the bacterial ribosomal protein bS6 family.

Binds together with bS18 to 16S ribosomal RNA. This Campylobacter concisus (strain 13826) protein is Small ribosomal subunit protein bS6.